We begin with the raw amino-acid sequence, 240 residues long: Uridylate kinase (240 aa).

13–16 (KFSG) is a binding site for ATP. Glycine 55 is a binding site for UMP. ATP is bound by residues glycine 56 and arginine 60. UMP is bound by residues aspartate 76 and 137–144 (TGNPFFTT). The ATP site is built by threonine 164, tyrosine 170, and aspartate 173.

Belongs to the UMP kinase family. In terms of assembly, homohexamer.

Its subcellular location is the cytoplasm. It catalyses the reaction UMP + ATP = UDP + ADP. The protein operates within pyrimidine metabolism; CTP biosynthesis via de novo pathway; UDP from UMP (UMPK route): step 1/1. Inhibited by UTP. Functionally, catalyzes the reversible phosphorylation of UMP to UDP. This Helicobacter pylori (strain J99 / ATCC 700824) (Campylobacter pylori J99) protein is Uridylate kinase.